A 150-amino-acid chain; its full sequence is UPF0201 protein APE_1751 (150 aa).

The protein belongs to the UPF0201 family.

The polypeptide is UPF0201 protein APE_1751 (Aeropyrum pernix (strain ATCC 700893 / DSM 11879 / JCM 9820 / NBRC 100138 / K1)).